Consider the following 776-residue polypeptide: Transcription activator of gluconeogenesis HCAG_03671 (776 aa).

The tract at residues 1–70 is disordered; that stretch reads MTASTQNGSP…NAKDPLRPRR (70 aa). 2 stretches are compositionally biased toward polar residues: residues 21-41 and 50-60; these read NQESKNMTANPADASESQSPA and ENGQKHTSTAA. Positions 77-105 form a DNA-binding region, zn(2)-C6 fungal-type; that stretch reads CFACQRAHLTCGDERPCQRCIKRGLQDAC. Disordered stretches follow at residues 140–159, 179–248, 286–351, 556–593, and 651–726; these read RTNASQQQNGPNSNSNKDSR, TQAK…PFGA, GAGD…NIYN, NLNVNTGGSSPRGSGTFTPRNGNGVDPHSGMSASGGGG, and REAQ…SPKQ. Residues 142 to 155 are compositionally biased toward low complexity; it reads NASQQQNGPNSNSN. The segment covering 195–217 has biased composition (polar residues); it reads MQDTSINPSAFQAPSPTSTPNFD. Positions 218-229 are enriched in low complexity; the sequence is LSSNPPNRNLSS. 4 stretches are compositionally biased toward polar residues: residues 230–244, 292–322, 334–351, and 557–576; these read AMTQTPSSASNQTQD, PSDSATQRGSIGRSSGTFTAQNFGDSTNTQP, WNPSGQSQTNPRNNNIYN, and LNVNTGGSSPRGSGTFTPRN. The span at 657–669 shows a compositional bias: gly residues; that stretch reads GPDGKGGGGGGGD. Residues 670–714 are compositionally biased toward low complexity; sequence VATTAATTSTSTSNGANSSGHANANRNNTNPNNSSPPSSSSAAAA.

This sequence belongs to the ERT1/acuK family.

It localises to the nucleus. Transcription factor which regulates nonfermentable carbon utilization. Activator of gluconeogenetic genes. The protein is Transcription activator of gluconeogenesis HCAG_03671 of Ajellomyces capsulatus (strain NAm1 / WU24) (Darling's disease fungus).